Consider the following 549-residue polypeptide: Chaperonin GroEL (549 aa).

ATP contacts are provided by residues 30–33 (TLGP), lysine 51, 87–91 (DGTTT), glycine 415, 479–481 (NAA), and aspartate 495.

This sequence belongs to the chaperonin (HSP60) family. As to quaternary structure, forms a cylinder of 14 subunits composed of two heptameric rings stacked back-to-back. Interacts with the co-chaperonin GroES.

Its subcellular location is the cytoplasm. The catalysed reaction is ATP + H2O + a folded polypeptide = ADP + phosphate + an unfolded polypeptide.. Together with its co-chaperonin GroES, plays an essential role in assisting protein folding. The GroEL-GroES system forms a nano-cage that allows encapsulation of the non-native substrate proteins and provides a physical environment optimized to promote and accelerate protein folding. The protein is Chaperonin GroEL of Stenotrophomonas maltophilia (strain K279a).